Consider the following 210-residue polypeptide: Chaperone protein TorD (210 aa).

This sequence belongs to the TorD/DmsD family. TorD subfamily.

The protein resides in the cytoplasm. In terms of biological role, involved in the biogenesis of TorA. Acts on TorA before the insertion of the molybdenum cofactor and, as a result, probably favors a conformation of the apoenzyme that is competent for acquiring the cofactor. This Salmonella newport (strain SL254) protein is Chaperone protein TorD.